Here is a 192-residue protein sequence, read N- to C-terminus: Large ribosomal subunit protein uL5 (192 aa).

The protein belongs to the universal ribosomal protein uL5 family. Part of the 50S ribosomal subunit; contacts the 5S rRNA and probably tRNA. Forms a bridge to the 30S subunit in the 70S ribosome.

This is one of the proteins that bind and probably mediate the attachment of the 5S RNA into the large ribosomal subunit, where it forms part of the central protuberance. In the 70S ribosome it contacts protein S13 of the 30S subunit (bridge B1b), connecting the 2 subunits; this bridge is implicated in subunit movement. May contact the P site tRNA; the 5S rRNA and some of its associated proteins might help stabilize positioning of ribosome-bound tRNAs. This Aeropyrum pernix (strain ATCC 700893 / DSM 11879 / JCM 9820 / NBRC 100138 / K1) protein is Large ribosomal subunit protein uL5.